The chain runs to 174 residues: Peptide deformylase (174 aa).

Fe cation contacts are provided by Cys-94 and His-136. Glu-137 is an active-site residue. His-140 serves as a coordination point for Fe cation.

This sequence belongs to the polypeptide deformylase family. Fe(2+) is required as a cofactor.

It catalyses the reaction N-terminal N-formyl-L-methionyl-[peptide] + H2O = N-terminal L-methionyl-[peptide] + formate. Removes the formyl group from the N-terminal Met of newly synthesized proteins. Requires at least a dipeptide for an efficient rate of reaction. N-terminal L-methionine is a prerequisite for activity but the enzyme has broad specificity at other positions. The protein is Peptide deformylase of Maricaulis maris (strain MCS10) (Caulobacter maris).